Reading from the N-terminus, the 177-residue chain is Large ribosomal subunit protein uL6 (177 aa).

It belongs to the universal ribosomal protein uL6 family. In terms of assembly, part of the 50S ribosomal subunit.

In terms of biological role, this protein binds to the 23S rRNA, and is important in its secondary structure. It is located near the subunit interface in the base of the L7/L12 stalk, and near the tRNA binding site of the peptidyltransferase center. The protein is Large ribosomal subunit protein uL6 of Rhodopseudomonas palustris (strain HaA2).